The primary structure comprises 340 residues: Ketol-acid reductoisomerase (NADP(+)) (340 aa).

The KARI N-terminal Rossmann domain maps to 1–183 (MAVTVYYDKD…GAGRTGIIET (183 aa)). Residues 26 to 29 (FGSQ), K49, S54, and 84 to 87 (DELQ) each bind NADP(+). The active site involves H109. G135 contacts NADP(+). A KARI C-terminal knotted domain is found at 184–329 (TFKDETETDL…EKLRAMMPWI (146 aa)). D192, E196, E228, and E232 together coordinate Mg(2+). Residue S253 participates in substrate binding.

It belongs to the ketol-acid reductoisomerase family. It depends on Mg(2+) as a cofactor.

The catalysed reaction is (2R)-2,3-dihydroxy-3-methylbutanoate + NADP(+) = (2S)-2-acetolactate + NADPH + H(+). It carries out the reaction (2R,3R)-2,3-dihydroxy-3-methylpentanoate + NADP(+) = (S)-2-ethyl-2-hydroxy-3-oxobutanoate + NADPH + H(+). The protein operates within amino-acid biosynthesis; L-isoleucine biosynthesis; L-isoleucine from 2-oxobutanoate: step 2/4. Its pathway is amino-acid biosynthesis; L-valine biosynthesis; L-valine from pyruvate: step 2/4. Its function is as follows. Involved in the biosynthesis of branched-chain amino acids (BCAA). Catalyzes an alkyl-migration followed by a ketol-acid reduction of (S)-2-acetolactate (S2AL) to yield (R)-2,3-dihydroxy-isovalerate. In the isomerase reaction, S2AL is rearranged via a Mg-dependent methyl migration to produce 3-hydroxy-3-methyl-2-ketobutyrate (HMKB). In the reductase reaction, this 2-ketoacid undergoes a metal-dependent reduction by NADPH to yield (R)-2,3-dihydroxy-isovalerate. The polypeptide is Ketol-acid reductoisomerase (NADP(+)) (Campylobacter hominis (strain ATCC BAA-381 / DSM 21671 / CCUG 45161 / LMG 19568 / NCTC 13146 / CH001A)).